The chain runs to 244 residues: Extracellular superoxide dismutase [Cu-Zn] (244 aa).

The first 15 residues, 1-15 (MVAFLFCNLLLVACG), serve as a signal peptide directing secretion. Disulfide bonds link Cys-70/Cys-215 and Cys-132/Cys-214. N-linked (GlcNAc...) asparagine glycosylation is present at Asn-114. Cu cation contacts are provided by His-121, His-123, and His-138. 4 residues coordinate Zn(2+): His-138, His-146, His-149, and Asp-152. A Cu cation-binding site is contributed by His-188. Positions 224 to 244 (AWESQTKERKKRRRESECKTT) are disordered.

This sequence belongs to the Cu-Zn superoxide dismutase family. In terms of assembly, homodimer. Interacts with ATP7A; this interaction is copper-dependent and is required for SOD3 activity. Requires Cu cation as cofactor. Zn(2+) is required as a cofactor.

It is found in the secreted. Its subcellular location is the extracellular space. It localises to the golgi apparatus. The protein resides in the trans-Golgi network. The enzyme catalyses 2 superoxide + 2 H(+) = H2O2 + O2. In terms of biological role, protect the extracellular space from toxic effect of reactive oxygen intermediates by converting superoxide radicals into hydrogen peroxide and oxygen. This Rattus norvegicus (Rat) protein is Extracellular superoxide dismutase [Cu-Zn] (Sod3).